We begin with the raw amino-acid sequence, 499 residues long: NADH-quinone oxidoreductase subunit N (499 aa).

Helical transmembrane passes span 16–36 (AAFS…LDAF), 42–62 (AIPW…ITHL), 77–97 (GGFV…TILL), 109–129 (YGEV…LGSA), 133–153 (VSIF…TGFI), 167–187 (FLLG…MYGA), 208–228 (LLFW…VSAA), 252–272 (ATKA…VPGG), 274–294 (WQLS…VMAL), 302–322 (LLAY…SAGT), 327–347 (AGAL…FGVM), 376–396 (GSTM…GGFI), 411–433 (TWLV…RVVY), and 463–483 (GTLV…GGVL).

Belongs to the complex I subunit 2 family. NDH-1 is composed of 14 different subunits. Subunits NuoA, H, J, K, L, M, N constitute the membrane sector of the complex.

The protein resides in the cell inner membrane. It catalyses the reaction a quinone + NADH + 5 H(+)(in) = a quinol + NAD(+) + 4 H(+)(out). NDH-1 shuttles electrons from NADH, via FMN and iron-sulfur (Fe-S) centers, to quinones in the respiratory chain. The immediate electron acceptor for the enzyme in this species is believed to be a menaquinone. Couples the redox reaction to proton translocation (for every two electrons transferred, four hydrogen ions are translocated across the cytoplasmic membrane), and thus conserves the redox energy in a proton gradient. The polypeptide is NADH-quinone oxidoreductase subunit N (Salinibacter ruber (strain DSM 13855 / M31)).